An 837-amino-acid chain; its full sequence is Tuftelin-interacting protein 11 (837 aa).

Residues 1-13 (MSLSHLYRDGEGH) show a composition bias toward basic and acidic residues. 3 disordered regions span residues 1 to 31 (MSLS…DWDL), 54 to 73 (WAER…RARD), and 85 to 136 (LKKG…AGGT). The interval 1–50 (MSLSHLYRDGEGHMDDDEDERENFEITDWDLQNEFNPNRQRHWQTKEEAT) is required for interaction with DHX15. Serine 2 carries the post-translational modification Phosphoserine. Acidic residues predominate over residues 14 to 28 (MDDDEDERENFEITD). Residues 54 to 64 (WAERDSDEERP) are compositionally biased toward basic and acidic residues. Residues serine 59 and serine 98 each carry the phosphoserine modification. The span at 91-102 (EEAELEDSDDEE) shows a compositional bias: acidic residues. The span at 103–116 (KPVKQDEFPKDFGP) shows a compositional bias: basic and acidic residues. Serine 144 bears the Phosphoserine mark. One can recognise a G-patch domain in the interval 149-195 (TKGIGQKLLQKMGYVPGRGLGKNAQGIINPIEAKQRKGKGAVGAYGS). Disordered stretches follow at residues 183-236 (QRKG…KKKP) and 287-313 (HKHS…ARAP). Residue serine 210 is modified to Phosphoserine. A compositionally biased stretch (basic and acidic residues) spans 217–231 (EFQKELSQWRKDPSG). Positions 700–705 (VKDKFN) match the Nuclear localization signal motif. Positions 710–734 (IMNRAVSSNVGAYMQPGAREHIAYL) are required for nuclear speckle localization.

This sequence belongs to the TFP11/STIP family. Identified in the spliceosome C complex. Found in the Intron Large (IL) complex, a post-mRNA release spliceosomal complex containing the excised intron, U2, U5 and U6 snRNPs, and splicing factors. Interacts with TUFT1. Interacts with DHX15; indicative for a recruitment of DHX15 to the IL complex. Interacts with GCFC2.

It localises to the cytoplasm. The protein localises to the nucleus. Involved in pre-mRNA splicing, specifically in spliceosome disassembly during late-stage splicing events. Intron turnover seems to proceed through reactions in two lariat-intron associated complexes termed Intron Large (IL) and Intron Small (IS). In cooperation with DHX15 seems to mediate the transition of the U2, U5 and U6 snRNP-containing IL complex to the snRNP-free IS complex leading to efficient debranching and turnover of excised introns. May play a role in the differentiation of ameloblasts and odontoblasts or in the forming of the enamel extracellular matrix. This is Tuftelin-interacting protein 11 (TFIP11) from Bos taurus (Bovine).